The chain runs to 91 residues: Small ribosomal subunit protein uS19 (91 aa).

Belongs to the universal ribosomal protein uS19 family.

In terms of biological role, protein S19 forms a complex with S13 that binds strongly to the 16S ribosomal RNA. This is Small ribosomal subunit protein uS19 from Acinetobacter baumannii (strain AB307-0294).